The chain runs to 291 residues: 4-hydroxy-tetrahydrodipicolinate synthase (291 aa).

Pyruvate is bound at residue threonine 45. Tyrosine 131 functions as the Proton donor/acceptor in the catalytic mechanism. Lysine 159 functions as the Schiff-base intermediate with substrate in the catalytic mechanism. Isoleucine 202 lines the pyruvate pocket.

The protein belongs to the DapA family. As to quaternary structure, homotetramer; dimer of dimers.

The protein localises to the cytoplasm. The enzyme catalyses L-aspartate 4-semialdehyde + pyruvate = (2S,4S)-4-hydroxy-2,3,4,5-tetrahydrodipicolinate + H2O + H(+). It participates in amino-acid biosynthesis; L-lysine biosynthesis via DAP pathway; (S)-tetrahydrodipicolinate from L-aspartate: step 3/4. Its function is as follows. Catalyzes the condensation of (S)-aspartate-beta-semialdehyde [(S)-ASA] and pyruvate to 4-hydroxy-tetrahydrodipicolinate (HTPA). This Methanosarcina mazei (strain ATCC BAA-159 / DSM 3647 / Goe1 / Go1 / JCM 11833 / OCM 88) (Methanosarcina frisia) protein is 4-hydroxy-tetrahydrodipicolinate synthase.